Reading from the N-terminus, the 230-residue chain is MKIAVTKFLGTNCDLDVCHAVKLAGGEPELVFFTQENLDSYKGAVIPGGFSYGDYLRAGAISARTPIIKGLKKMVEEGKPVLGICNGAQIGLEAGFSKGTLTNNLNAKFICKWVYIRVENNKTPFTQYYKKGEVLKIPIAHAEGRFYADDETLDYMYKNNMIVFKYCDETGEVTEEANPNGSIDNIAGVCNENQNCVLLMPHPERASEKILGSDDGLKMFKGMIDYAKRI.

Residues 2–230 (KIAVTKFLGT…KGMIDYAKRI (229 aa)) enclose the Glutamine amidotransferase type-1 domain. Cys85 serves as the catalytic Nucleophile. Active-site residues include His202 and Glu204.

In terms of assembly, part of the FGAM synthase complex composed of 1 PurL, 1 PurQ and 2 PurS subunits.

It is found in the cytoplasm. It carries out the reaction N(2)-formyl-N(1)-(5-phospho-beta-D-ribosyl)glycinamide + L-glutamine + ATP + H2O = 2-formamido-N(1)-(5-O-phospho-beta-D-ribosyl)acetamidine + L-glutamate + ADP + phosphate + H(+). The catalysed reaction is L-glutamine + H2O = L-glutamate + NH4(+). It participates in purine metabolism; IMP biosynthesis via de novo pathway; 5-amino-1-(5-phospho-D-ribosyl)imidazole from N(2)-formyl-N(1)-(5-phospho-D-ribosyl)glycinamide: step 1/2. Its function is as follows. Part of the phosphoribosylformylglycinamidine synthase complex involved in the purines biosynthetic pathway. Catalyzes the ATP-dependent conversion of formylglycinamide ribonucleotide (FGAR) and glutamine to yield formylglycinamidine ribonucleotide (FGAM) and glutamate. The FGAM synthase complex is composed of three subunits. PurQ produces an ammonia molecule by converting glutamine to glutamate. PurL transfers the ammonia molecule to FGAR to form FGAM in an ATP-dependent manner. PurS interacts with PurQ and PurL and is thought to assist in the transfer of the ammonia molecule from PurQ to PurL. The protein is Phosphoribosylformylglycinamidine synthase subunit PurQ of Methanocaldococcus jannaschii (strain ATCC 43067 / DSM 2661 / JAL-1 / JCM 10045 / NBRC 100440) (Methanococcus jannaschii).